The primary structure comprises 283 residues: Non-selective voltage-gated ion channel VDAC1 (283 aa).

At Ala-2 the chain carries N-acetylalanine. Position 12 (Lys-12) interacts with ATP. A Glycyl lysine isopeptide (Lys-Gly) (interchain with G-Cter in ubiquitin) cross-link involves residue Lys-12. Ser-13 is subject to Phosphoserine. At Thr-19 the chain carries Phosphothreonine. Lys-20 serves as a coordination point for ATP. An N6-acetyllysine; alternate modification is found at Lys-20. Lys-20 is subject to N6-succinyllysine; alternate. Residue Lys-20 forms a Glycyl lysine isopeptide (Lys-Gly) (interchain with G-Cter in ubiquitin); alternate linkage. The next 2 membrane-spanning stretches (beta stranded) occupy residues Leu-26 to Ser-35 and Leu-39 to Ala-47. Residues Lys-53 and Lys-61 each participate in a glycyl lysine isopeptide (Lys-Gly) (interchain with G-Cter in ubiquitin) cross-link. Residues Val-54–Trp-64 form a beta stranded membrane-spanning segment. Tyr-67 bears the Phosphotyrosine mark. 3 beta stranded membrane passes run Leu-69–Asn-76, Thr-80–Asp-89, and Leu-95–Ser-104. Thr-107 is modified (phosphothreonine). An N6-acetyllysine; alternate modification is found at Lys-109. A Glycyl lysine isopeptide (Lys-Gly) (interchain with G-Cter in ubiquitin); alternate cross-link involves residue Lys-109. Lys-110 participates in a covalent cross-link: Glycyl lysine isopeptide (Lys-Gly) (interchain with G-Cter in ubiquitin). 4 consecutive transmembrane segments (beta stranded) span residues Asn-111–Arg-120, Ile-123–Asp-130, Ser-137–Gly-145, and Leu-150–Glu-158. Lys-161 is covalently cross-linked (Glycyl lysine isopeptide (Lys-Gly) (interchain with G-Cter in ubiquitin)). 6 beta stranded membrane-spanning segments follow: residues Arg-163–Thr-175, Phe-178–Asn-185, Glu-189–Val-198, Leu-202–Thr-211, Arg-218–Ile-227, and Ala-231–Asn-238. At Ser-193 the chain carries Phosphoserine; by NEK1. The residue at position 240 (Ser-240) is a Phosphoserine. NAD(+) is bound at residue Leu-242 to Gly-244. The beta stranded transmembrane segment at Leu-242–Leu-251 threads the bilayer. Lys-252 is modified (N6-acetyllysine). The beta stranded transmembrane segment at Gly-254–Leu-263 threads the bilayer. Ser-260–Asp-264 contributes to the NAD(+) binding site. N6-acetyllysine; alternate is present on Lys-266. Residue Lys-266 forms a Glycyl lysine isopeptide (Lys-Gly) (interchain with G-Cter in ubiquitin); alternate linkage. The beta stranded transmembrane segment at His-273 to Gln-282 threads the bilayer. A Glycyl lysine isopeptide (Lys-Gly) (interchain with G-Cter in ubiquitin) cross-link involves residue Lys-274.

The protein belongs to the eukaryotic mitochondrial porin family. In terms of assembly, homodimer and homotrimer; in response to cyclic AMP or calcium; oligomerization is required for scramblase activity. Component of the mitochondrial permeability transition pore complex (mPTPC), at least composed of SPG7, VDAC1 and PPIF. Interacts with SPG7, NIPSNAP2 and SLC25A30. Interacts with hexokinases including HK1. The HK1-VDAC1 complex interacts with ATF2. Interacts with BCL2L1. Interacts with BAK1. Interacts with RTL10/BOP (via BH3 domain). Interacts with amyloid-beta and APP; induces VDAC1 dephosphorylation. Interacts with TMEM41B. Interacts with BCAP31. Interacts with HSPA9; this interaction couples ITPR1 to VDAC1. In terms of processing, phosphorylation at Ser-193 by NEK1 promotes the closed conformational state preventing excessive mitochondrial membrane permeability and subsequent apoptotic cell death after injury. Phosphorylation by the AKT-GSK3B axis stabilizes the protein probably by preventing ubiquitin-mediated proteasomal degradation. Ubiquitinated. Undergoes monoubiquitination and polyubiquitination by PRKN; monoubiquitination at Lys-274 inhibits apoptosis, whereas polyubiquitination leads to its degradation and promotes mitophagy. Deubiquitinated by USP30. In terms of tissue distribution, predominantly in brain astrocytes.

The protein localises to the mitochondrion outer membrane. It localises to the cell membrane. It is found in the membrane raft. The catalysed reaction is chloride(in) = chloride(out). The enzyme catalyses K(+)(in) = K(+)(out). It carries out the reaction ATP(in) = ATP(out). It catalyses the reaction Ca(2+)(in) = Ca(2+)(out). The catalysed reaction is Na(+)(in) = Na(+)(out). The enzyme catalyses Mg(2+)(in) = Mg(2+)(out). It carries out the reaction L-glutamate(out) = L-glutamate(in). It catalyses the reaction dopamine(out) = dopamine(in). The catalysed reaction is acetylcholine(in) = acetylcholine(out). The enzyme catalyses Fe(III)-[cytochrome c](out) = Fe(III)-[cytochrome c](in). It carries out the reaction a 1,2-diacyl-sn-glycero-3-phosphocholine(in) = a 1,2-diacyl-sn-glycero-3-phosphocholine(out). It catalyses the reaction a 1,2-diacyl-sn-glycero-3-phospho-L-serine(in) = a 1,2-diacyl-sn-glycero-3-phospho-L-serine(out). Inhibited by nitric oxide. Functionally, non-selective voltage-gated ion channel that mediates the transport of anions and cations through the mitochondrion outer membrane and plasma membrane. The channel at the outer mitochondrial membrane allows diffusion of small hydrophilic molecules; in the plasma membrane it is involved in cell volume regulation and apoptosis. It adopts an open conformation at low or zero membrane potential and a closed conformation at potentials above 30-40 mV. The open state has a weak anion selectivity whereas the closed state is cation-selective. Binds various signaling molecules, including the sphingolipid ceramide, the phospholipid phosphatidylcholine, and the sterols cholesterol and oxysterol. In depolarized mitochondria, acts downstream of PRKN and PINK1 to promote mitophagy or prevent apoptosis; polyubiquitination by PRKN promotes mitophagy, while monoubiquitination by PRKN decreases mitochondrial calcium influx which ultimately inhibits apoptosis. May participate in the formation of the permeability transition pore complex (PTPC) responsible for the release of mitochondrial products that triggers apoptosis. May mediate ATP export from cells. Part of a complex composed of HSPA9, ITPR1 and VDAC1 that regulates mitochondrial calcium-dependent apoptosis by facilitating calcium transport from the ER lumen to the mitochondria intermembrane space thus providing calcium for the downstream calcium channel MCU that directly releases it into mitochondria matrix. Mediates cytochrome c efflux. In terms of biological role, catalyzes the scrambling of phospholipids across the outer mitochondrial membrane; the mechanism is unrelated to channel activity and is capable of translocating both anionic and zwitterionic phospholipids. The sequence is that of Non-selective voltage-gated ion channel VDAC1 from Bos taurus (Bovine).